The following is a 434-amino-acid chain: Double-stranded RNA-binding protein 2 (434 aa).

DRBM domains lie at 1 to 70 and 87 to 155; these read MYKN…ALSN and VYKN…SLKQ. Positions 402–434 are disordered; it reads EKTASKETERAEFKDSSKGEPETARERLENLKI.

Heterodimer with DRB1 or DRB5. Interacts with DCL1 and DCL5.

Its subcellular location is the cytoplasm. In terms of biological role, binds double-stranded RNA. May be involved in RNA-mediated silencing. The sequence is that of Double-stranded RNA-binding protein 2 (DRB2) from Arabidopsis thaliana (Mouse-ear cress).